The primary structure comprises 125 residues: Large ribosomal subunit protein bL19 (125 aa).

It belongs to the bacterial ribosomal protein bL19 family.

Functionally, this protein is located at the 30S-50S ribosomal subunit interface and may play a role in the structure and function of the aminoacyl-tRNA binding site. The protein is Large ribosomal subunit protein bL19 of Wolbachia pipientis subsp. Culex pipiens (strain wPip).